Here is a 215-residue protein sequence, read N- to C-terminus: Glutathione S-transferase F10 (215 aa).

One can recognise a GST N-terminal domain in the interval 2-81; sequence VLTIYAPLFA…YIAEKYRSQG (80 aa). Glutathione contacts are provided by residues 11–12, 39–40, 52–53, and 65–66; these read AS, QR, KI, and ES. Residues 88–215 form the GST C-terminal domain; it reads TIEERGQVEQ…EVSAKYSLPV (128 aa).

Belongs to the GST superfamily. Phi family. In terms of assembly, interacts with BAK1. In terms of tissue distribution, expressed in roots, stems, floral buds, mature flowers and leaves.

Its subcellular location is the cytoplasm. It is found in the cytosol. It carries out the reaction RX + glutathione = an S-substituted glutathione + a halide anion + H(+). In vitro, possesses glutathione S-transferase activity toward 1-chloro-2,4-dinitrobenzene (CDNB) and benzyl isothiocyanate (BITC). May be involved in the conjugation of reduced glutathione to a wide number of exogenous and endogenous hydrophobic electrophiles and have a detoxification role against certain herbicides. The chain is Glutathione S-transferase F10 from Arabidopsis thaliana (Mouse-ear cress).